A 151-amino-acid polypeptide reads, in one-letter code: Acidic phospholipase A2 2 (151 aa).

An N-terminal signal peptide occupies residues 1–27; that stretch reads MYPAHLLVLLAVCVSLLGAASIPARPL. 7 disulfides stabilise this stretch: cysteine 38/cysteine 104, cysteine 54/cysteine 151, cysteine 56/cysteine 72, cysteine 71/cysteine 132, cysteine 78/cysteine 125, cysteine 88/cysteine 118, and cysteine 111/cysteine 123. Positions 55, 57, and 59 each coordinate Ca(2+). Histidine 75 is an active-site residue. Position 76 (aspartate 76) interacts with Ca(2+). The active site involves aspartate 126.

This sequence belongs to the phospholipase A2 family. Group I subfamily. D49 sub-subfamily. It depends on Ca(2+) as a cofactor. Expressed by the venom gland.

The protein localises to the secreted. The enzyme catalyses a 1,2-diacyl-sn-glycero-3-phosphocholine + H2O = a 1-acyl-sn-glycero-3-phosphocholine + a fatty acid + H(+). PLA2 catalyzes the calcium-dependent hydrolysis of the 2-acyl groups in 3-sn-phosphoglycerides. This is Acidic phospholipase A2 2 from Tropidechis carinatus (Australian rough-scaled snake).